Reading from the N-terminus, the 388-residue chain is Succinate--CoA ligase [ADP-forming] subunit beta (388 aa).

Positions 9–244 (KQLFARYGLP…QSQEDPREAQ (236 aa)) constitute an ATP-grasp domain. ATP-binding positions include Lys-46, 53–55 (GRG), Glu-99, Thr-102, and Glu-107. 2 residues coordinate Mg(2+): Asn-199 and Asp-213. Residues Asn-264 and 321–323 (GIV) each bind substrate.

The protein belongs to the succinate/malate CoA ligase beta subunit family. As to quaternary structure, heterotetramer of two alpha and two beta subunits. Mg(2+) is required as a cofactor.

The enzyme catalyses succinate + ATP + CoA = succinyl-CoA + ADP + phosphate. It carries out the reaction GTP + succinate + CoA = succinyl-CoA + GDP + phosphate. It functions in the pathway carbohydrate metabolism; tricarboxylic acid cycle; succinate from succinyl-CoA (ligase route): step 1/1. Its function is as follows. Succinyl-CoA synthetase functions in the citric acid cycle (TCA), coupling the hydrolysis of succinyl-CoA to the synthesis of either ATP or GTP and thus represents the only step of substrate-level phosphorylation in the TCA. The beta subunit provides nucleotide specificity of the enzyme and binds the substrate succinate, while the binding sites for coenzyme A and phosphate are found in the alpha subunit. In Escherichia coli O8 (strain IAI1), this protein is Succinate--CoA ligase [ADP-forming] subunit beta.